We begin with the raw amino-acid sequence, 289 residues long: ATP synthase subunit a (289 aa).

Transmembrane regions (helical) follow at residues 43-63, 104-124, 160-180, 193-213, 232-252, and 259-279; these read AFHLDTLGWSVALGLIFLLIF, IAPLALTIFVWVFLMNAVDLI, FCVFALIIFYSIKVKGLGGFI, IFVQILLIPVNFLLEFVTLIA, VFILIAVMFGSGLLWLSGLGV, and AVFHILIITLQAFIFMMLTIV.

This sequence belongs to the ATPase A chain family. In terms of assembly, F-type ATPases have 2 components, CF(1) - the catalytic core - and CF(0) - the membrane proton channel. CF(1) has five subunits: alpha(3), beta(3), gamma(1), delta(1), epsilon(1). CF(0) has three main subunits: a(1), b(2) and c(9-12). The alpha and beta chains form an alternating ring which encloses part of the gamma chain. CF(1) is attached to CF(0) by a central stalk formed by the gamma and epsilon chains, while a peripheral stalk is formed by the delta and b chains.

Its subcellular location is the cell inner membrane. Its function is as follows. Key component of the proton channel; it plays a direct role in the translocation of protons across the membrane. This is ATP synthase subunit a from Pseudomonas putida (strain ATCC 47054 / DSM 6125 / CFBP 8728 / NCIMB 11950 / KT2440).